A 301-amino-acid polypeptide reads, in one-letter code: N-acetylmuramic acid 6-phosphate etherase (301 aa).

One can recognise an SIS domain in the interval 55-215 (IADALRAGGR…STISMVALGK (161 aa)). Glu-83 serves as the catalytic Proton donor. Residue Glu-111 is part of the active site.

This sequence belongs to the GCKR-like family. MurNAc-6-P etherase subfamily. Homodimer.

It catalyses the reaction N-acetyl-D-muramate 6-phosphate + H2O = N-acetyl-D-glucosamine 6-phosphate + (R)-lactate. It functions in the pathway amino-sugar metabolism; 1,6-anhydro-N-acetylmuramate degradation. It participates in amino-sugar metabolism; N-acetylmuramate degradation. Its pathway is cell wall biogenesis; peptidoglycan recycling. Its function is as follows. Specifically catalyzes the cleavage of the D-lactyl ether substituent of MurNAc 6-phosphate, producing GlcNAc 6-phosphate and D-lactate. Together with AnmK, is also required for the utilization of anhydro-N-acetylmuramic acid (anhMurNAc) either imported from the medium or derived from its own cell wall murein, and thus plays a role in cell wall recycling. This Burkholderia lata (strain ATCC 17760 / DSM 23089 / LMG 22485 / NCIMB 9086 / R18194 / 383) protein is N-acetylmuramic acid 6-phosphate etherase.